Reading from the N-terminus, the 264-residue chain is Thymidylate synthase (264 aa).

A dUMP-binding site is contributed by arginine 21. Histidine 51 is a binding site for (6R)-5,10-methylene-5,6,7,8-tetrahydrofolate. Residue 126–127 coordinates dUMP; the sequence is RR. The active-site Nucleophile is the cysteine 146. DUMP-binding positions include 166-169, asparagine 177, and 207-209; these read RSAD and HLY. Aspartate 169 is a binding site for (6R)-5,10-methylene-5,6,7,8-tetrahydrofolate. A (6R)-5,10-methylene-5,6,7,8-tetrahydrofolate-binding site is contributed by serine 263.

This sequence belongs to the thymidylate synthase family. Bacterial-type ThyA subfamily. Homodimer.

Its subcellular location is the cytoplasm. It catalyses the reaction dUMP + (6R)-5,10-methylene-5,6,7,8-tetrahydrofolate = 7,8-dihydrofolate + dTMP. Its pathway is pyrimidine metabolism; dTTP biosynthesis. Catalyzes the reductive methylation of 2'-deoxyuridine-5'-monophosphate (dUMP) to 2'-deoxythymidine-5'-monophosphate (dTMP) while utilizing 5,10-methylenetetrahydrofolate (mTHF) as the methyl donor and reductant in the reaction, yielding dihydrofolate (DHF) as a by-product. This enzymatic reaction provides an intracellular de novo source of dTMP, an essential precursor for DNA biosynthesis. This is Thymidylate synthase from Neisseria meningitidis serogroup A / serotype 4A (strain DSM 15465 / Z2491).